The sequence spans 914 residues: Probable dipeptidyl-aminopeptidase B (914 aa).

Positions 1–10 (MGKSEADEDA) are enriched in acidic residues. The segment at 1–81 (MGKSEADEDA…DQPFLPSRKG (81 aa)) is disordered. At 1–89 (MGKSEADEDA…KGSGARARRV (89 aa)) the chain is on the cytoplasmic side. Low complexity predominate over residues 20–34 (SSSAASQTSSDSGLS). The chain crosses the membrane as a helical; Signal-anchor for type II membrane protein span at residues 90 to 110 (FWGLLLLCLAGWVLAFVLFLI). The Vacuolar segment spans residues 111-914 (QGRSGYSATS…FKRALPVFVH (804 aa)). Asparagine 347 and asparagine 638 each carry an N-linked (GlcNAc...) asparagine glycan. Serine 752 (charge relay system) is an active-site residue. Residue asparagine 806 is glycosylated (N-linked (GlcNAc...) asparagine). Catalysis depends on charge relay system residues aspartate 829 and histidine 862.

The protein belongs to the peptidase S9B family.

It localises to the vacuole membrane. It catalyses the reaction Release of an N-terminal dipeptide, Xaa-Yaa-|-Zaa-, from a polypeptide, preferentially when Yaa is Pro, provided Zaa is neither Pro nor hydroxyproline.. Its function is as follows. Type IV dipeptidyl-peptidase which removes N-terminal dipeptides sequentially from polypeptides having unsubstituted N-termini provided that the penultimate residue is proline. The sequence is that of Probable dipeptidyl-aminopeptidase B (dapB) from Aspergillus terreus (strain NIH 2624 / FGSC A1156).